Reading from the N-terminus, the 91-residue chain is Large ribosomal subunit protein uL23c (91 aa).

This sequence belongs to the universal ribosomal protein uL23 family. As to quaternary structure, part of the 50S ribosomal subunit.

It is found in the plastid. Its subcellular location is the chloroplast. Its function is as follows. Binds to 23S rRNA. This Marchantia polymorpha (Common liverwort) protein is Large ribosomal subunit protein uL23c (rpl23).